A 404-amino-acid polypeptide reads, in one-letter code: L-cysteine:1D-myo-inositol 2-amino-2-deoxy-alpha-D-glucopyranoside ligase 1 (404 aa).

Residue C47 coordinates Zn(2+). L-cysteinyl-5'-AMP contacts are provided by residues 47-50, T62, and 85-87; these read CGIT and NIT. A 'HIGH' region motif is present at residues 49–59; it reads ITPYDSTHLGH. The 'ERGGDP' region motif lies at 188-193; the sequence is ERGGDP. Residue W228 participates in L-cysteinyl-5'-AMP binding. Zn(2+) is bound at residue C232. 250–252 is a binding site for L-cysteinyl-5'-AMP; the sequence is GSD. H257 provides a ligand contact to Zn(2+). I284 provides a ligand contact to L-cysteinyl-5'-AMP. Residues 290 to 294 carry the 'KMSKS' region motif; that stretch reads KMSKS.

The protein belongs to the class-I aminoacyl-tRNA synthetase family. MshC subfamily. Monomer. Requires Zn(2+) as cofactor.

The catalysed reaction is 1D-myo-inositol 2-amino-2-deoxy-alpha-D-glucopyranoside + L-cysteine + ATP = 1D-myo-inositol 2-(L-cysteinylamino)-2-deoxy-alpha-D-glucopyranoside + AMP + diphosphate + H(+). Functionally, catalyzes the ATP-dependent condensation of GlcN-Ins and L-cysteine to form L-Cys-GlcN-Ins. In Corynebacterium jeikeium (strain K411), this protein is L-cysteine:1D-myo-inositol 2-amino-2-deoxy-alpha-D-glucopyranoside ligase 1.